A 113-amino-acid polypeptide reads, in one-letter code: Iron-sulfur cluster insertion protein ErpA (113 aa).

The iron-sulfur cluster site is built by C41, C105, and C107.

This sequence belongs to the HesB/IscA family. In terms of assembly, homodimer. Requires iron-sulfur cluster as cofactor.

In terms of biological role, required for insertion of 4Fe-4S clusters for at least IspG. This Vibrio vulnificus (strain YJ016) protein is Iron-sulfur cluster insertion protein ErpA.